We begin with the raw amino-acid sequence, 1802 residues long: Bromodomain and WD repeat-containing protein 3 (1802 aa).

8 WD repeats span residues 170 to 209 (IKMHKRILGHLSSVYCVAFDRSGRRIFTGSDDCLVKIWAT), 213 to 251 (RLLATLRGHSAEISDMAVNYENTLIAAGSCDKVVRVWCL), 255 to 297 (APVA…FWQW), 307 to 347 (RPVK…IYYL), 353 to 393 (EKIA…IWQY), 400 to 452 (SIVL…VWNS), 456 to 495 (QLLHTLSGHDDEVFVLEAHPFDQRIILSAGHDGNIFIWDL), and 502 to 542 (RNYF…LFGF). 2 positions are modified to phosphoserine: serine 693 and serine 703. The interval 768-910 (KPSYTTQRND…PKQTRKKKGG (143 aa)) is disordered. Residues 785-795 (SLRRTQRKRQH) are compositionally biased toward basic residues. The segment covering 796–817 (TYQTRSNIEHNSQASCQNSGVQ) has biased composition (polar residues). Residues 818 to 829 (EDSDSSSEEDET) are compositionally biased toward acidic residues. Residues 846–859 (SESSSSDSSSEYSD) are compositionally biased toward low complexity. Serine 885 and serine 886 each carry phosphoserine. A compositionally biased stretch (basic and acidic residues) spans 889–898 (ENLKSLEERQ). Over residues 899-909 (KKPKQTRKKKG) the composition is skewed to basic residues. The Bromo 1 domain maps to 1138-1245 (WGAHSRDEEC…DVLLRFIGDQ (108 aa)). 4 disordered regions span residues 1262-1292 (RNSTDAEEDTEIVDLDSDGPGTSSGRKVKCR), 1326-1361 (RQPADLLSYPGHQEQEGESSESVVPERQQDSSLSED), 1438-1500 (IQSQ…SPVS), and 1520-1725 (SSSS…RAKR). A compositionally biased stretch (acidic residues) spans 1266–1278 (DAEEDTEIVDLDS). The Bromo 2 domain maps to 1300-1430 (CNPDAWKKQC…ALFESHIKNI (131 aa)). Basic residues predominate over residues 1441-1453 (QKRRRPRYRKRLR). Over residues 1454-1468 (SSSSSLSSSGAPSPK) the composition is skewed to low complexity. Residues 1479 to 1499 (KNDQNTSVSHARTSSPFSSPV) are compositionally biased toward polar residues. The segment covering 1520-1533 (SSSSFGGYSRSGNS) has biased composition (low complexity). A phosphoserine mark is found at serine 1577 and serine 1579. The segment covering 1587 to 1600 (GEDKEKKETKEKSH) has biased composition (basic and acidic residues). The span at 1601–1626 (LSTSESGELGSSLSSESTCGSDSDSE) shows a compositional bias: low complexity. Basic and acidic residues predominate over residues 1627–1643 (STSRTDQDYVDGDHDYS). Basic residues-rich tracts occupy residues 1649–1666 (RPKRKLRKQHGNGKRNWK) and 1684–1697 (RGGRGRGGRGRGSR). A Phosphoserine modification is found at serine 1763.

Found in most adult tissues. Down-regulated in a majority of the B-CLL cases examined.

Functionally, plays a role in the regulation of cell morphology and cytoskeletal organization. Required in the control of cell shape. The chain is Bromodomain and WD repeat-containing protein 3 (BRWD3) from Homo sapiens (Human).